We begin with the raw amino-acid sequence, 231 residues long: NADH-ubiquinone oxidoreductase chain 4 (231 aa).

A run of 6 helical transmembrane segments spans residues 1–21 (PIAG…YGII), 34–54 (MFLP…LTCL), 63–85 (IAYS…TPWG), 89–111 (ALAL…NTTY), 128–148 (ILPM…AIPP), and 169–189 (TIIM…HMFL).

This sequence belongs to the complex I subunit 4 family.

Its subcellular location is the mitochondrion membrane. It carries out the reaction a ubiquinone + NADH + 5 H(+)(in) = a ubiquinol + NAD(+) + 4 H(+)(out). Its function is as follows. Core subunit of the mitochondrial membrane respiratory chain NADH dehydrogenase (Complex I) that is believed to belong to the minimal assembly required for catalysis. Complex I functions in the transfer of electrons from NADH to the respiratory chain. The immediate electron acceptor for the enzyme is believed to be ubiquinone. This is NADH-ubiquinone oxidoreductase chain 4 (MT-ND4) from Bothrocophias hyoprora (Amazonian hognose viper).